The following is a 547-amino-acid chain: Probable bifunctional tRNA threonylcarbamoyladenosine biosynthesis protein (547 aa).

Residues 1 to 329 (MDTSKDLICI…YRSDMVEVNW (329 aa)) are kae1. Residues histidine 112, histidine 116, and tyrosine 133 each contribute to the Fe cation site. L-threonylcarbamoyladenylate contacts are provided by residues 133-137 (YVSGG), aspartate 165, glycine 178, glutamate 182, and asparagine 262. Aspartate 290 contacts Fe cation. The Protein kinase domain occupies 346-547 (IIPEHLIGKG…KEVEKRARYL (202 aa)). Residues 352–360 (IGKGAEADI) and lysine 373 each bind ATP. The Proton acceptor; for kinase activity role is filled by aspartate 465.

The protein in the N-terminal section; belongs to the KAE1 / TsaD family. This sequence in the C-terminal section; belongs to the protein kinase superfamily. Tyr protein kinase family. BUD32 subfamily. In terms of assembly, component of the KEOPS complex that consists of Kae1, Bud32, Cgi121 and Pcc1; the whole complex dimerizes. Fe(2+) is required as a cofactor.

It localises to the cytoplasm. It carries out the reaction L-seryl-[protein] + ATP = O-phospho-L-seryl-[protein] + ADP + H(+). The enzyme catalyses L-threonyl-[protein] + ATP = O-phospho-L-threonyl-[protein] + ADP + H(+). It catalyses the reaction L-threonylcarbamoyladenylate + adenosine(37) in tRNA = N(6)-L-threonylcarbamoyladenosine(37) in tRNA + AMP + H(+). Functionally, required for the formation of a threonylcarbamoyl group on adenosine at position 37 (t(6)A37) in tRNAs that read codons beginning with adenine. Is a component of the KEOPS complex that is probably involved in the transfer of the threonylcarbamoyl moiety of threonylcarbamoyl-AMP (TC-AMP) to the N6 group of A37. The Kae1 domain likely plays a direct catalytic role in this reaction. The Bud32 domain probably displays kinase activity that regulates Kae1 function. The protein is Probable bifunctional tRNA threonylcarbamoyladenosine biosynthesis protein of Methanococcus maripaludis (strain C7 / ATCC BAA-1331).